The following is a 509-amino-acid chain: Cytochrome P450 4A10 (509 aa).

The next 2 helical transmembrane spans lie at 11 to 31 (FTGSISGFLQVASVLGLLLLL) and 121 to 141 (LLAPWIGYGLLLLNGQPWFQH). Residue Glu-320 coordinates heme. Residue Ser-439 is modified to Phosphoserine. Residue Cys-456 participates in heme binding.

Belongs to the cytochrome P450 family. Heme is required as a cofactor. As to expression, expressed in liver (at protein level) and kidney (at protein level).

It localises to the endoplasmic reticulum membrane. The protein localises to the microsome membrane. It catalyses the reaction an omega-methyl-long-chain fatty acid + reduced [NADPH--hemoprotein reductase] + O2 = an omega-hydroxy-long-chain fatty acid + oxidized [NADPH--hemoprotein reductase] + H2O + H(+). The catalysed reaction is dodecanoate + reduced [NADPH--hemoprotein reductase] + O2 = 12-hydroxydodecanoate + oxidized [NADPH--hemoprotein reductase] + H2O + H(+). The enzyme catalyses dodecanoate + reduced [NADPH--hemoprotein reductase] + O2 = 11-hydroxydodecanoate + oxidized [NADPH--hemoprotein reductase] + H2O + H(+). It carries out the reaction tetradecanoate + reduced [NADPH--hemoprotein reductase] + O2 = 14-hydroxytetradecanoate + oxidized [NADPH--hemoprotein reductase] + H2O + H(+). It catalyses the reaction hexadecanoate + reduced [NADPH--hemoprotein reductase] + O2 = 16-hydroxyhexadecanoate + oxidized [NADPH--hemoprotein reductase] + H2O + H(+). The catalysed reaction is (9Z)-octadecenoate + reduced [NADPH--hemoprotein reductase] + O2 = 18-hydroxy-(9Z)-octadecenoate + oxidized [NADPH--hemoprotein reductase] + H2O + H(+). The enzyme catalyses (9Z,12Z)-octadecadienoate + reduced [NADPH--hemoprotein reductase] + O2 = 18-hydroxy-(9Z,12Z)-octadecadienoate + oxidized [NADPH--hemoprotein reductase] + H2O + H(+). It carries out the reaction (9Z,12Z)-octadecadienoate + reduced [NADPH--hemoprotein reductase] + O2 = 17-hydroxy-(9Z,12Z)-octadecadienoate + oxidized [NADPH--hemoprotein reductase] + H2O + H(+). It catalyses the reaction (5Z,8Z,11Z,14Z)-eicosatetraenoate + reduced [NADPH--hemoprotein reductase] + O2 = 20-hydroxy-(5Z,8Z,11Z,14Z)-eicosatetraenoate + oxidized [NADPH--hemoprotein reductase] + H2O + H(+). The catalysed reaction is 8,9-epoxy-(5Z,11Z,14Z)-eicosatrienoate + reduced [NADPH--hemoprotein reductase] + O2 = 20-hydroxy-8,9-epoxy-(5Z,11Z,14Z)-eicosatrienoate + oxidized [NADPH--hemoprotein reductase] + H2O + H(+). Functionally, a cytochrome P450 monooxygenase involved in the metabolism of fatty acids. Catalyzes predominantly the oxidation of the terminal carbon (omega-oxidation) of long-chain fatty acids. Acts as a major omega-hydroxylase for dodecanoic (lauric) acid in liver. In kidney, may play an important role in omega-hydroxylation of (5Z,8Z,11Z,14Z)-eicosatetraenoic acid (arachidonate) to 20-hydroxyeicosatetraenoic acid (20-HETE), a signaling molecule acting both as vasoconstrictive and natriuretic with overall effect on arterial blood pressure. Also participates in the formation of anti-inflammatory hydroxyepoxyeicosatrienoic acids (HEETs) in kidney by converting 8,9-epoxyeicosatrienoic acid (EET) to 20,8,9-HEET, an activator of PPARA. Displays substantially lower fatty acid omega-1 hydroxylase activity. Mechanistically, uses molecular oxygen inserting one oxygen atom into a substrate, and reducing the second into a water molecule, with two electrons provided by NADPH via cytochrome P450 reductase (CPR; NADPH-ferrihemoprotein reductase). The polypeptide is Cytochrome P450 4A10 (Cyp4a10) (Rattus norvegicus (Rat)).